The sequence spans 328 residues: D-cysteine desulfhydrase (328 aa).

At lysine 51 the chain carries N6-(pyridoxal phosphate)lysine.

It belongs to the ACC deaminase/D-cysteine desulfhydrase family. In terms of assembly, homodimer. Pyridoxal 5'-phosphate is required as a cofactor.

The catalysed reaction is D-cysteine + H2O = hydrogen sulfide + pyruvate + NH4(+) + H(+). Catalyzes the alpha,beta-elimination reaction of D-cysteine and of several D-cysteine derivatives. It could be a defense mechanism against D-cysteine. The protein is D-cysteine desulfhydrase of Salmonella paratyphi C (strain RKS4594).